A 1482-amino-acid polypeptide reads, in one-letter code: Cystic fibrosis transmembrane conductance regulator (1482 aa).

Residues 1–77 lie on the Cytoplasmic side of the membrane; it reads MQKSPLERAS…KLINALRRCF (77 aa). The helical transmembrane segment at 78-98 threads the bilayer; the sequence is FWRFVFYGILLYLGEVTKAVQ. The ABC transmembrane type-1 1 domain maps to 81 to 365; the sequence is FVFYGILLYL…WAVQTWYDSL (285 aa). Residues 99–122 lie on the Extracellular side of the membrane; the sequence is PLLLGRIIASYDPDNKVERSIAIY. The chain crosses the membrane as a helical span at residues 123–146; sequence LAIGLCLLFIVRTLLLHPAIFGLH. Topologically, residues 147–195 are cytoplasmic; the sequence is HMGMQMRIAMFSLIYKKTLKLSSRVLDKISIGQLVSLLSNNLNKFDEGL. Residues 196-216 form a helical membrane-spanning segment; sequence ALAHFVWIAPLQVTLLMGLIW. Topologically, residues 217-222 are extracellular; it reads DLLQAS. The helical transmembrane segment at 223 to 243 threads the bilayer; sequence AFCGLAFLIIVALGQAGLGRM. Over 244–298 the chain is Cytoplasmic; it reads MMKYRDKRAGKINERLVITSEMIENIQSVKAYCWEEAMEKMIENLRQIELRLTRK. Residues 299 to 319 form a helical membrane-spanning segment; it reads AAYVRYFNSAAFFFSGFFVVF. At 320-339 the chain is on the extracellular side; the sequence is LSVLPYAMLKGIILRKIFTT. The helical transmembrane segment at 340–358 threads the bilayer; sequence ISFCIVLRMAVTRQFPWAV. At 359 to 858 the chain is on the cytoplasmic side; sequence QTWYDSLGAI…YLRYVTVHKS (500 aa). ATP-binding positions include Trp-401, Ser-434, 458–465, and Gln-493; that span reads GSTGAGKT. Residues 423-646 enclose the ABC transporter 1 domain; sequence NGDNSLFFSN…RPDFSSELMG (224 aa). Residue Cys-524 is the site of S-palmitoyl cysteine attachment. 2 positions are modified to phosphoserine: Ser-549 and Ser-660. Residues 654–831 are disordered R region; the sequence is SAERRNSILT…EEINEEDLKE (178 aa). Ser-670 bears the Phosphoserine; by PKA mark. At Ser-685 the chain carries Phosphoserine. Lys-687 participates in a covalent cross-link: Glycyl lysine isopeptide (Lys-Gly) (interchain with G-Cter in ubiquitin). 2 positions are modified to phosphoserine: Ser-699 and Ser-711. At Thr-716 the chain carries Phosphothreonine. A phosphoserine mark is found at Ser-736, Ser-767, Ser-790, Ser-795, and Ser-813. A helical transmembrane segment spans residues 859–879; it reads LIFVLIWCLVVFLAEVAVSLV. The region spanning 859 to 1156 is the ABC transmembrane type-1 2 domain; it reads LIFVLIWCLV…AVNSSIDVDS (298 aa). Residues 880-919 are Extracellular-facing; it reads VLYLLRTSSLQDKGNNTTVNANSSYGVIVTNTSSYYLLYI. 4 N-linked (GlcNAc...) asparagine glycosylation sites follow: Asn-894, Asn-895, Asn-901, and Asn-910. A discontinuously helical transmembrane segment spans residues 920–940; it reads YVGIADSLFALAIFRGLPLVH. Residues 941-991 lie on the Cytoplasmic side of the membrane; it reads TLIKVSKTLHHKMLRSILQAPMSTFNTLKAGRILNRFSKDIAILDDLLPLT. Residues 992-1012 form a helical membrane-spanning segment; the sequence is MFDFIQLLLIVIGAVVVVSVL. Residues 1013 to 1014 lie on the Extracellular side of the membrane; the sequence is QP. Residues 1015–1035 traverse the membrane as a helical segment; sequence YIFLATVPVIAAFIILRAYFL. At 1036-1096 the chain is on the cytoplasmic side; that stretch reads HTSQQLKQLE…TANWFLYLST (61 aa). The chain crosses the membrane as a helical span at residues 1097 to 1117; the sequence is LRWFQMRIEIIFVIFFIAVTF. Residues 1118–1131 lie on the Extracellular side of the membrane; sequence VSILTTGEGEGTIG. Residues 1132–1152 traverse the membrane as a helical segment; the sequence is IILTLAMNIMNTLQWAVNSSI. Over 1153–1482 the chain is Cytoplasmic; it reads DVDSLMRSVS…TEEEVQETRL (330 aa). In terms of domain architecture, ABC transporter 2 spans 1212–1445; sequence MTVKDLTAKY…KSLFRQAISP (234 aa). ATP is bound by residues Tyr-1221 and 1246-1253; that span reads GRTGSGKS. Residues 1388-1482 are interaction with GORASP2; that stretch reads RTLKQAFADC…TEEEVQETRL (95 aa). Cys-1397 carries the S-palmitoyl cysteine lipid modification. Positions 1454 to 1463 are enriched in basic residues; sequence HRNSSRHRSR. The tract at residues 1454–1482 is disordered; the sequence is HRNSSRHRSRSQIAALKEETEEEVQETRL. Position 1458 is a phosphoserine (Ser-1458). The segment covering 1472–1482 has biased composition (acidic residues); it reads ETEEEVQETRL. The PDZ-binding signature appears at 1480–1482; sequence TRL.

It belongs to the ABC transporter superfamily. ABCC family. CFTR transporter (TC 3.A.1.202) subfamily. As to quaternary structure, monomer; does not require oligomerization for channel activity. May form oligomers in the membrane. Interacts with SLC26A3, SLC26A6 and NHERF1. Interacts with SHANK2. Interacts with MYO6. Interacts (via C-terminus) with GOPC (via PDZ domain); this promotes CFTR internalization and thereby decreases channel activity. Interacts with SLC4A7 through NHERF1. Found in a complex with MYO5B and RAB11A. Interacts with ANO1. Interacts with SLC26A8. Interacts with AHCYL1; the interaction increases CFTR activity. Interacts with CSE1L. The core-glycosylated form interacts with GORASP2 (via PDZ GRASP-type 1 domain) in respone to ER stress. Interacts with MARCHF2; the interaction leads to CFTR ubiqtuitination and degradation. Interacts with ADGRG2. In terms of processing, N-glycosylated. Post-translationally, phosphorylated; cAMP treatment promotes phosphorylation and activates the channel. Dephosphorylation decreases the ATPase activity (in vitro). Phosphorylation at PKA sites activates the channel. Phosphorylation at PKC sites enhances the response to phosphorylation by PKA. Phosphorylated by AMPK; this inhibits channel activity. Ubiquitinated, leading to its degradation in the lysosome. Deubiquitination by USP10 in early endosomes enhances its endocytic recycling to the cell membrane. Ubiquitinated by RNF185 during ER stress. Ubiquitinated by MARCHF2.

The protein localises to the apical cell membrane. Its subcellular location is the early endosome membrane. The protein resides in the cell membrane. It localises to the recycling endosome membrane. It is found in the endoplasmic reticulum membrane. The protein localises to the nucleus. The catalysed reaction is ATP + H2O + closed Cl(-) channel = ADP + phosphate + open Cl(-) channel.. It carries out the reaction chloride(in) = chloride(out). The enzyme catalyses hydrogencarbonate(in) = hydrogencarbonate(out). It catalyses the reaction ATP + H2O = ADP + phosphate + H(+). In terms of biological role, epithelial ion channel that plays an important role in the regulation of epithelial ion and water transport and fluid homeostasis. Mediates the transport of chloride ions across the cell membrane. Possesses an intrinsic ATPase activity and utilizes ATP to gate its channel; the passive flow of anions through the channel is gated by cycles of ATP binding and hydrolysis by the ATP-binding domains. The ion channel is also permeable to HCO(3)(-); selectivity depends on the extracellular chloride concentration. Exerts its function also by modulating the activity of other ion channels and transporters. Contributes to the regulation of the pH and the ion content of the epithelial fluid layer. Modulates the activity of the epithelial sodium channel (ENaC) complex, in part by regulating the cell surface expression of the ENaC complex. May regulate bicarbonate secretion and salvage in epithelial cells by regulating the transporter SLC4A7. Can inhibit the chloride channel activity of ANO1. Plays a role in the chloride and bicarbonate homeostasis during sperm epididymal maturation and capacitation. The chain is Cystic fibrosis transmembrane conductance regulator from Loxodonta africana (African elephant).